We begin with the raw amino-acid sequence, 95 residues long: Acylphosphatase (95 aa).

An Acylphosphatase-like domain is found at 8–95 (RAKILVRGKV…GNFRTFEIKK (88 aa)). Active-site residues include arginine 23 and asparagine 41.

The protein belongs to the acylphosphatase family.

The enzyme catalyses an acyl phosphate + H2O = a carboxylate + phosphate + H(+). The sequence is that of Acylphosphatase (acyP) from Leptospira interrogans serogroup Icterohaemorrhagiae serovar copenhageni (strain Fiocruz L1-130).